Consider the following 331-residue polypeptide: Type 2 lactosamine alpha-2,3-sialyltransferase (331 aa).

At 1-4 (MRGY) the chain is on the cytoplasmic side. Residues 5–25 (LVAIFLSAVFLYYVLHCILWG) traverse the membrane as a helical; Signal-anchor for type II membrane protein segment. The Lumenal portion of the chain corresponds to 26–331 (TNVYWVAPVE…KNLVINLTQD (306 aa)). Asn-129, Asn-181, Asn-282, Asn-295, Asn-308, and Asn-327 each carry an N-linked (GlcNAc...) asparagine glycan.

This sequence belongs to the glycosyltransferase 29 family.

The protein localises to the golgi apparatus membrane. It catalyses the reaction a neolactoside nLc4Cer(d18:1(4E)) + CMP-N-acetyl-beta-neuraminate = a neolactoside IV(3)-alpha-NeuAc-nLc4Cer(d18:1(4E)) + CMP + H(+). The enzyme catalyses a beta-D-galactosyl-(1-&gt;4)-N-acetyl-beta-D-glucosaminyl derivative + CMP-N-acetyl-beta-neuraminate = an N-acetyl-alpha-neuraminyl-(2-&gt;3)-beta-D-galactosyl-(1-&gt;4)-N-acetyl-beta-D-glucosaminyl derivative + CMP + H(+). It carries out the reaction a neolactoside nLc6Cer(d18:1(4E)) + CMP-N-acetyl-beta-neuraminate = a neolactoside VI(3)-alpha-NeuNAc-nLc6Cer(d18:1(4E)) + CMP + H(+). In terms of biological role, transfers the sialyl residue from CMP-N-acetyl-beta-neuraminate to the terminal galactose residue on sugar chains of glycoproteins and glycolipids. It's alpha-2,3-sialyltransferase activity is specific toward type II glycan chains (Galbeta1-4GlcNAc) on glycoproteins and glycolipids such as neolactosides nLc4Cer and nLc6Cer, whose sialyl-products serve as precursors for the Lewis X antigen. Critically involved in the synthesis of functional selectin ligands needed for neutrophil recruitment during inflammation and lymphocyte homing to the lymph nodes. The polypeptide is Type 2 lactosamine alpha-2,3-sialyltransferase (ST3GAL6) (Pan troglodytes (Chimpanzee)).